The chain runs to 180 residues: ATP synthase subunit delta (180 aa).

It belongs to the ATPase delta chain family. As to quaternary structure, F-type ATPases have 2 components, F(1) - the catalytic core - and F(0) - the membrane proton channel. F(1) has five subunits: alpha(3), beta(3), gamma(1), delta(1), epsilon(1). CF(0) has four main subunits: a(1), b(1), b'(1) and c(10-14). The alpha and beta chains form an alternating ring which encloses part of the gamma chain. F(1) is attached to F(0) by a central stalk formed by the gamma and epsilon chains, while a peripheral stalk is formed by the delta, b and b' chains.

The protein localises to the cellular thylakoid membrane. F(1)F(0) ATP synthase produces ATP from ADP in the presence of a proton or sodium gradient. F-type ATPases consist of two structural domains, F(1) containing the extramembraneous catalytic core and F(0) containing the membrane proton channel, linked together by a central stalk and a peripheral stalk. During catalysis, ATP synthesis in the catalytic domain of F(1) is coupled via a rotary mechanism of the central stalk subunits to proton translocation. In terms of biological role, this protein is part of the stalk that links CF(0) to CF(1). It either transmits conformational changes from CF(0) to CF(1) or is implicated in proton conduction. The polypeptide is ATP synthase subunit delta (Prochlorococcus marinus subsp. pastoris (strain CCMP1986 / NIES-2087 / MED4)).